The sequence spans 781 residues: Molybdenum cofactor sulfurase (781 aa).

Lysine 246 is modified (N6-(pyridoxal phosphate)lysine). The active site involves cysteine 413. The MOSC domain occupies 635–781 (LRLLRQSGQR…MTCGDVVLVE (147 aa)). A Phosphoserine modification is found at serine 734.

The protein belongs to the class-V pyridoxal-phosphate-dependent aminotransferase family. MOCOS subfamily. Pyridoxal 5'-phosphate is required as a cofactor.

It catalyses the reaction Mo-molybdopterin + L-cysteine + AH2 = thio-Mo-molybdopterin + L-alanine + A + H2O. It functions in the pathway cofactor biosynthesis; molybdopterin biosynthesis. Its function is as follows. Sulfurates the molybdenum cofactor. Sulfation of molybdenum is essential for xanthine dehydrogenase (XDH) and aldehyde oxidase (ADO) enzymes in which molybdenum cofactor is liganded by 1 oxygen and 1 sulfur atom in active form. The chain is Molybdenum cofactor sulfurase from Drosophila melanogaster (Fruit fly).